A 146-amino-acid chain; its full sequence is UPF0178 protein BAMEG_1545 (146 aa).

This sequence belongs to the UPF0178 family.

In Bacillus anthracis (strain CDC 684 / NRRL 3495), this protein is UPF0178 protein BAMEG_1545.